Consider the following 303-residue polypeptide: Recombination-associated protein RdgC (303 aa).

This sequence belongs to the RdgC family.

The protein resides in the cytoplasm. It is found in the nucleoid. Functionally, may be involved in recombination. This is Recombination-associated protein RdgC from Serratia proteamaculans (strain 568).